A 558-amino-acid polypeptide reads, in one-letter code: Laccase-10 (558 aa).

Positions 1–22 are cleaved as a signal peptide; sequence MVFPIRILVLFALLAFPACVHG. 2 consecutive Plastocyanin-like domains span residues 30 to 146 and 157 to 308; these read NVVT…PKLG and EEVI…YSGT. N-linked (GlcNAc...) asparagine glycosylation occurs at Asn76. Cu cation is bound by residues His80 and His82. N-linked (GlcNAc...) asparagine glycosylation is present at Asn112. The Cu cation site is built by His125 and His127. Asn185, Asn296, Asn323, Asn373, Asn383, Asn400, and Asn441 each carry an N-linked (GlcNAc...) asparagine glycan. A Plastocyanin-like 3 domain is found at 408-542; sequence DFPAKPRRVF…KMAFLVENGK (135 aa). His459, His462, His464, His521, Cys522, His523, and His527 together coordinate Cu cation. Asn545 is a glycosylation site (N-linked (GlcNAc...) asparagine).

The protein belongs to the multicopper oxidase family. Requires Cu cation as cofactor. As to expression, ubiquitous, with lower levels in siliques.

Its subcellular location is the secreted. The protein localises to the extracellular space. The protein resides in the apoplast. The enzyme catalyses 4 hydroquinone + O2 = 4 benzosemiquinone + 2 H2O. Its function is as follows. Lignin degradation and detoxification of lignin-derived products. This chain is Laccase-10 (LAC10), found in Arabidopsis thaliana (Mouse-ear cress).